The primary structure comprises 969 residues: Rab3 GTPase-activating protein catalytic subunit (969 aa).

Residues 532–549 (DDGKKSSSSDGARDRSRG) are compositionally biased toward basic and acidic residues. The disordered stretch occupies residues 532-613 (DDGKKSSSSD…PEGRLQPHGT (82 aa)). Residues 550–572 (APEGAGPEGAGPAEAAGKSWDSW) show a composition bias toward low complexity. Residues 573–589 (SDSEDEFFECVSDTEEM) show a composition bias toward acidic residues. Residues 590-608 (KEDKEEAENRSRSKPEGRL) are compositionally biased toward basic and acidic residues.

Belongs to the Rab3-GAP catalytic subunit family. The Rab3 GTPase-activating complex is a heterodimer composed of rab3gap1 and rab3gap2. The Rab3 GTPase-activating complex interacts with DMXL2. Interacts with LMAN1.

The protein resides in the cytoplasm. Its subcellular location is the endoplasmic reticulum. The protein localises to the golgi apparatus. It is found in the cis-Golgi network. Its function is as follows. Catalytic subunit of the Rab3 GTPase-activating (Rab3GAP) complex composed of rab3gap1 and rab3gap2, which has GTPase-activating protein (GAP) activity towards various Rab3 subfamily members (RAB3A, RAB3B, RAB3C and RAB3D), RAB5A and RAB43, and guanine nucleotide exchange factor (GEF) activity towards RAB18. As part of the Rab3GAP complex, acts as a GAP for Rab3 proteins by converting active RAB3-GTP to the inactive form RAB3-GDP. Rab3 proteins are involved in regulated exocytosis of neurotransmitters and hormones. The Rab3GAP complex, acts as a GEF for RAB18 by promoting the conversion of inactive RAB18-GDP to the active form RAB18-GTP. Recruits and stabilizes RAB18 at the cis-Golgi membrane where RAB18 is most likely activated. Also involved in RAB18 recruitment at the endoplasmic reticulum (ER) membrane where it maintains proper ER structure. Required for normal eye and brain development. May participate in neurodevelopmental processes such as proliferation, migration and differentiation before synapse formation, and non-synaptic vesicular release of neurotransmitters. In Danio rerio (Zebrafish), this protein is Rab3 GTPase-activating protein catalytic subunit (rab3gap1).